The primary structure comprises 83 residues: Transmembrane protein EP84R (83 aa).

A run of 2 helical transmembrane segments spans residues 31–51 (VIGI…IIIL) and 59–79 (AGSV…FLIY).

It belongs to the asfivirus EP84R family.

It is found in the virion membrane. This chain is Transmembrane protein EP84R, found in Ornithodoros (relapsing fever ticks).